The following is a 261-amino-acid chain: Small ribosomal subunit protein eS1 (261 aa).

The span at 1–18 (MAVGKNKRISKGKKGGKK) shows a compositional bias: basic residues. Residues 1–20 (MAVGKNKRISKGKKGGKKKA) are disordered.

The protein belongs to the eukaryotic ribosomal protein eS1 family. In terms of assembly, component of the small ribosomal subunit. Mature ribosomes consist of a small (40S) and a large (60S) subunit. The 40S subunit contains about 33 different proteins and 1 molecule of RNA (18S). The 60S subunit contains about 49 different proteins and 3 molecules of RNA (25S, 5.8S and 5S).

The protein resides in the cytoplasm. The protein is Small ribosomal subunit protein eS1 of Catharanthus roseus (Madagascar periwinkle).